We begin with the raw amino-acid sequence, 465 residues long: Gamma-aminobutyric acid receptor subunit gamma-1 (465 aa).

Positions 1-35 are cleaved as a signal peptide; the sequence is MGPLKAFLFSPFLLRSQSRGVRLVFLLLTLHLGNC. Residues 36–273 lie on the Extracellular side of the membrane; that stretch reads VDKADDEDDE…FDLSRRMGYF (238 aa). N-linked (GlcNAc...) asparagine glycans are attached at residues asparagine 50 and asparagine 127. Cysteine 188 and cysteine 202 are oxidised to a cystine. N-linked (GlcNAc...) asparagine glycosylation occurs at asparagine 245. The chain crosses the membrane as a helical span at residues 274–294; sequence TIQTYIPCILTVVLSWVSFWI. Residues 295–300 lie on the Cytoplasmic side of the membrane; that stretch reads NKDAVP. A helical transmembrane segment spans residues 301–320; sequence ARTSLGITTVLTMTTLSTIA. Residues 321–328 lie on the Extracellular side of the membrane; it reads RKSLPKVS. A helical transmembrane segment spans residues 329 to 349; it reads YVTAMDLFVSVCFIFVFAALM. At 350–444 the chain is on the cytoplasmic side; it reads EYGTLHYFTS…RIAKIDSYSR (95 aa). The chain crosses the membrane as a helical span at residues 445–465; that stretch reads IFFPTAFALFNLVYWVGYLYL.

The protein belongs to the ligand-gated ion channel (TC 1.A.9) family. Gamma-aminobutyric acid receptor (TC 1.A.9.5) subfamily. GABRG1 sub-subfamily. In terms of assembly, heteropentamer, formed by a combination of alpha (GABRA1-6), beta (GABRB1-3), gamma (GABRG1-3), delta (GABRD), epsilon (GABRE), rho (GABRR1-3), pi (GABRP) and theta (GABRQ) chains, each subunit exhibiting distinct physiological and pharmacological properties. May be palmitoylated.

Its subcellular location is the postsynaptic cell membrane. It localises to the cell membrane. The enzyme catalyses chloride(in) = chloride(out). Gamma subunit of the heteropentameric ligand-gated chloride channel gated by gamma-aminobutyric acid (GABA), a major inhibitory neurotransmitter in the brain. GABA-gated chloride channels, also named GABA(A) receptors (GABAAR), consist of five subunits arranged around a central pore and contain GABA active binding site(s) located at the alpha and beta subunit interface(s). When activated by GABA, GABAARs selectively allow the flow of chloride anions across the cell membrane down their electrochemical gradient. Chloride influx into the postsynaptic neuron following GABAAR opening decreases the neuron ability to generate a new action potential, thereby reducing nerve transmission. This is Gamma-aminobutyric acid receptor subunit gamma-1 from Homo sapiens (Human).